The sequence spans 280 residues: Urease accessory protein UreD 3 (280 aa).

It belongs to the UreD family. UreD, UreF and UreG form a complex that acts as a GTP-hydrolysis-dependent molecular chaperone, activating the urease apoprotein by helping to assemble the nickel containing metallocenter of UreC. The UreE protein probably delivers the nickel.

The protein localises to the cytoplasm. Its function is as follows. Required for maturation of urease via the functional incorporation of the urease nickel metallocenter. This Bradyrhizobium sp. (strain ORS 278) protein is Urease accessory protein UreD 3.